A 277-amino-acid polypeptide reads, in one-letter code: Protein CIMAP1D (277 aa).

STPGR repeat units follow at residues 122 to 148 (PGPG…LGSR), 202 to 227 (PGPG…ILGR), and 238 to 263 (PGPG…MGIR). The interval 181 to 277 (PSYTVVGRTP…ASTMVGDTKC (97 aa)) is disordered.

The protein belongs to the CIMAP family.

This is Protein CIMAP1D (Cimap1d) from Mus musculus (Mouse).